A 168-amino-acid chain; its full sequence is UPF0134 protein MPN_524 (168 aa).

This sequence belongs to the UPF0134 family.

This chain is UPF0134 protein MPN_524, found in Mycoplasma pneumoniae (strain ATCC 29342 / M129 / Subtype 1) (Mycoplasmoides pneumoniae).